The chain runs to 544 residues: Glutamyl-tRNA(Gln) amidotransferase subunit B, chloroplastic/mitochondrial (544 aa).

Belongs to the GatB/GatE family. GatB subfamily. In terms of assembly, subunit of the heterotrimeric GatCAB amidotransferase (AdT) complex, composed of A, B and C subunits.

The protein localises to the mitochondrion. Its subcellular location is the plastid. It is found in the chloroplast. It carries out the reaction L-glutamyl-tRNA(Gln) + L-glutamine + ATP + H2O = L-glutaminyl-tRNA(Gln) + L-glutamate + ADP + phosphate + H(+). Functionally, allows the formation of correctly charged Gln-tRNA(Gln) through the transamidation of misacylated Glu-tRNA(Gln) in chloroplasts and mitochondria. The reaction takes place in the presence of glutamine and ATP through an activated gamma-phospho-Glu-tRNA(Gln). This is Glutamyl-tRNA(Gln) amidotransferase subunit B, chloroplastic/mitochondrial from Oryza sativa subsp. japonica (Rice).